The chain runs to 224 residues: Envelope glycoprotein L (224 aa).

A signal peptide spans 1–19; sequence MGILGWVGLIAVGVLCVRG. An interaction with gH region spans residues 20–161; that stretch reads GLPSTEYVIR…FDYSRTRRCV (142 aa). Residues 23–201 enclose the gL alphaherpesvirus-type domain; sequence STEYVIRSRV…LTTPPPIIAT (179 aa). 2 disulfide bridges follow: Cys-44/Cys-76 and Cys-149/Cys-160. The interval 161-224 is disordered; the sequence is VGRQDLGPTN…RRRRPHSRRL (64 aa). Basic residues predominate over residues 213 to 224; sequence KSRRRRPHSRRL.

It belongs to the herpesviridae glycoprotein L (gL) family. Alphaherpesvirinae gL subfamily. In terms of assembly, interacts with glycoprotein H (gH); this interaction is necessary for the correct processing and cell surface expression of gH. The heterodimer gH/gL seems to interact with gB trimers during fusion.

The protein resides in the virion membrane. It is found in the host cell membrane. Its subcellular location is the host Golgi apparatus. It localises to the host trans-Golgi network. Its function is as follows. The heterodimer glycoprotein H-glycoprotein L is required for the fusion of viral and plasma membranes leading to virus entry into the host cell. Acts as a functional inhibitor of gH and maintains gH in an inhibited form. Upon binding to host integrins, gL dissociates from gH leading to activation of the viral fusion glycoproteins gB and gH. The polypeptide is Envelope glycoprotein L (Human herpesvirus 1 (strain 17) (HHV-1)).